A 242-amino-acid chain; its full sequence is C-reactive protein 1.4 (242 aa).

The first 24 residues, 1–24 (MKTFHGPTFGTAVFLYLLLFLTSA), serve as a signal peptide directing secretion. The Pentraxin (PTX) domain occupies 30 to 241 (ITSKVKFPPS…GVVLSPNEIC (212 aa)). Residues T60 and Y63 each contribute to the phosphocholine site. Intrachain disulfides connect C62–C125 and C112–C144. Positions 85 and 86 each coordinate Ca(2+). N-linked (GlcNAc...) asparagine glycosylation occurs at N147. E168, Q169, D170, and Q180 together coordinate Ca(2+). Cysteines 207 and 241 form a disulfide.

It belongs to the pentraxin family. In terms of assembly, homopentamer. Pentraxin (or pentaxin) have a discoid arrangement of 5 non-covalently bound subunits. Requires Ca(2+) as cofactor.

Its subcellular location is the secreted. Might serve the role of immunoglobulins. This Limulus polyphemus (Atlantic horseshoe crab) protein is C-reactive protein 1.4.